Here is a 511-residue protein sequence, read N- to C-terminus: Steroid 17-alpha-hydroxylase/17,20 lyase (511 aa).

Cys-442 contacts heme.

Belongs to the cytochrome P450 family. Requires heme as cofactor.

The protein resides in the endoplasmic reticulum membrane. Its subcellular location is the microsome membrane. It catalyses the reaction a C21-steroid + reduced [NADPH--hemoprotein reductase] + O2 = a 17alpha-hydroxy-C21-steroid + oxidized [NADPH--hemoprotein reductase] + H2O + H(+). It carries out the reaction progesterone + reduced [NADPH--hemoprotein reductase] + O2 = 17alpha-hydroxyprogesterone + oxidized [NADPH--hemoprotein reductase] + H2O + H(+). The catalysed reaction is pregnenolone + reduced [NADPH--hemoprotein reductase] + O2 = 17alpha-hydroxypregnenolone + oxidized [NADPH--hemoprotein reductase] + H2O + H(+). The enzyme catalyses 17alpha-hydroxyprogesterone + reduced [NADPH--hemoprotein reductase] + O2 = androst-4-ene-3,17-dione + acetate + oxidized [NADPH--hemoprotein reductase] + H2O + 2 H(+). It catalyses the reaction 17alpha-hydroxyprogesterone + reduced [NADPH--hemoprotein reductase] + O2 = 16alpha,17alpha-dihydroxyprogesterone + oxidized [NADPH--hemoprotein reductase] + H2O + H(+). It carries out the reaction 16alpha,17alpha-dihydroxyprogesterone + reduced [NADPH--hemoprotein reductase] + O2 = 6beta,16alpha,17alpha-trihydroxyprogesterone + oxidized [NADPH--hemoprotein reductase] + H2O + H(+). The catalysed reaction is 17alpha-hydroxypregnenolone + reduced [NADPH--hemoprotein reductase] + O2 = 3beta-hydroxyandrost-5-en-17-one + acetate + oxidized [NADPH--hemoprotein reductase] + H2O + 2 H(+). The enzyme catalyses 16alpha,17alpha-dihydroxypregnenolone + reduced [NADPH--hemoprotein reductase] + O2 = 3beta,16alpha-dihydroxy-androst-5-en-17-one + acetate + oxidized [NADPH--hemoprotein reductase] + H2O + 2 H(+). It catalyses the reaction 3beta-hydroxyandrost-5-en-17-one + reduced [NADPH--hemoprotein reductase] + O2 = 3beta,16alpha-dihydroxy-androst-5-en-17-one + oxidized [NADPH--hemoprotein reductase] + H2O + H(+). It carries out the reaction androst-4-ene-3,17-dione + reduced [NADPH--hemoprotein reductase] + O2 = 16alpha-hydroxyandrost-4-ene-3,17-dione + oxidized [NADPH--hemoprotein reductase] + H2O + H(+). Its pathway is steroid hormone biosynthesis. The protein operates within steroid biosynthesis; glucocorticoid biosynthesis. Its activity is regulated as follows. Regulated predominantly by intracellular cAMP levels. The 17,20-lyase activity is stimulated by cytochrome b5, which acts as an allosteric effector increasing the Vmax of the lyase activity. Its function is as follows. A cytochrome P450 monooxygenase involved in corticoid and androgen biosynthesis. Catalyzes 17-alpha hydroxylation of C21 steroids, which is common for both pathways. A second oxidative step, required only for androgen synthesis, involves an acyl-carbon cleavage. The 17-alpha hydroxy intermediates, as part of adrenal glucocorticoids biosynthesis pathway, are precursors of cortisol. Hydroxylates steroid hormones, pregnenolone and progesterone to form 17-alpha hydroxy metabolites, followed by the cleavage of the C17-C20 bond to form C19 steroids, dehydroepiandrosterone (DHEA) and androstenedione. Has 16-alpha hydroxylase activity. Catalyzes 16-alpha hydroxylation of 17-alpha hydroxy pregnenolone, followed by the cleavage of the C17-C20 bond to form 16-alpha-hydroxy DHEA. Also 16-alpha hydroxylates androgens, relevant for estriol synthesis. Mechanistically, uses molecular oxygen inserting one oxygen atom into a substrate, and reducing the second into a water molecule, with two electrons provided by NADPH via cytochrome P450 reductase (CPR; NADPH-ferrihemoprotein reductase). The protein is Steroid 17-alpha-hydroxylase/17,20 lyase (CYP17A1) of Mesocricetus auratus (Golden hamster).